A 499-amino-acid chain; its full sequence is Potassium voltage-gated channel subfamily A member 2 (499 aa).

Positions 1-26 (MTVATGDPADEAAALPGHPQDTYDPE) are disordered. Residues 1–125 (MTVATGDPAD…YELGEEAMEM (125 aa)) form a tetramerization domain region. Residues 1–160 (MTVATGDPAD…LLFEYPESSG (160 aa)) lie on the Cytoplasmic side of the membrane. The chain crosses the membrane as a helical span at residues 161 to 182 (PARIIAIVSVMVILISIVSFCL). At 183 to 221 (ETLPIFRDENEDMHGSGVTFHTYSNSTIGYQQSTSFTDP) the chain is on the extracellular side. N-linked (GlcNAc...) asparagine glycosylation occurs at Asn-207. The chain crosses the membrane as a helical span at residues 222–243 (FFIVETLCIIWFSFEFLVRFFA). The S-palmitoyl cysteine moiety is linked to residue Cys-244. Residues 244-254 (CPSKAGFFTNI) are Cytoplasmic-facing. Residues 255–275 (MNIIDIVAIIPYFITLGTELA) form a helical membrane-spanning segment. Residues 276–289 (EKPEDAQQGQQAMS) are Extracellular-facing. The chain crosses the membrane as a helical; Voltage-sensor span at residues 290–310 (LAILRVIRLVRVFRIFKLSRH). At 311-325 (SKGLQILGQTLKASM) the chain is on the cytoplasmic side. The interval 312–325 (KGLQILGQTLKASM) is S4-S5 linker. The chain crosses the membrane as a helical span at residues 326–347 (RELGLLIFFLFIGVILFSSAVY). Residues 348–361 (FAEADERESQFPSI) lie on the Extracellular side of the membrane. Residues 362–373 (PDAFWWAVVSMT) constitute an intramembrane region (helical). A Selectivity filter motif is present at residues 374 to 379 (TVGYGD). Residues 374–381 (TVGYGDMV) lie within the membrane without spanning it. Residues 382 to 388 (PTTIGGK) lie on the Extracellular side of the membrane. Residues 389–417 (IVGSLCAIAGVLTIALPVPVIVSNFNYFY) form a helical membrane-spanning segment. Residues 418-499 (HRETEGEEQA…VNITKMLTDV (82 aa)) are Cytoplasmic-facing. Tyr-429 is modified (phosphotyrosine). Residues Ser-434, Ser-440, Ser-441, and Ser-449 each carry the phosphoserine modification. Phosphotyrosine is present on Tyr-458. Phosphoserine is present on Ser-468. The short motif at 497 to 499 (TDV) is the PDZ-binding element.

Belongs to the potassium channel family. A (Shaker) (TC 1.A.1.2) subfamily. Kv1.2/KCNA2 sub-subfamily. Homotetramer and heterotetramer with other channel-forming alpha subunits, such as KCNA1, KCNA4, KCNA5, KCNA6 and KCNA7. Channel activity is regulated by interaction with the beta subunits, including KCNAB1 and KCNAB2. Identified in a complex with KCNA1 and KCNAB2. Identified in a complex with KCNA5 and KCNAB1. Identified in a complex with KCNA4 and FYN. Interacts with the beta subunit KCNAB1. Interacts with PTK2B. Interacts (via C-terminus) with CTTN. Interacts (via N-terminal cytoplasmic domain) with RHOA (GTP-bound form); this regulates channel activity by reducing location at the cell surface in response to CHRM1 activation. Interacts with DRD2. Interacts with SIGMAR1; cocaine consumption leads to increased interaction. Interacts with ADAM22. Interacts (via C-terminus) with the PDZ domains of DLG1, DLG2 and DLG4. Interacts with CNTNAP2. Interacts with ADAM11. Interacts with LYNX1. In terms of processing, phosphorylated on tyrosine residues; phosphorylation increases in response to ischemia. Phosphorylated on tyrosine residues by activated PTK2B/PYK2. Phosphorylation on tyrosine residues suppresses ion channel activity. Phosphorylated on tyrosine residues in response to CHRM1 activation; this abolishes interaction with CTTN. This is probably due to endocytosis of the phosphorylated channel subunits. Phosphorylated on serine residues in response to increased cAMP levels; phosphorylation is apparently not catalyzed by PKA. N-glycosylated, with complex, sialylated N-glycans. Detected in brain cortex. Detected in peroneal nerve in the juxtaparanodal regions of the node of Ranvier; expression is decreased in patients with diabetes mellitus that suffer from axonal neuropathy. Detected in paranodal and juxtanodal zones in myelinated spinal cord (at protein level).

It localises to the cell membrane. It is found in the membrane. The protein resides in the cell projection. Its subcellular location is the axon. The protein localises to the synapse. It localises to the endoplasmic reticulum membrane. It is found in the lamellipodium membrane. The protein resides in the synaptosome. Its subcellular location is the presynaptic cell membrane. The protein localises to the dendrite. It localises to the cell junction. It is found in the paranodal septate junction. The enzyme catalyses K(+)(in) = K(+)(out). With respect to regulation, inhibited by 4-aminopyridine (4-AP) and charybdotoxin (CTX), but not by tetraethylammonium (TEA). Inhibited by dendrotoxin (DTX). Inhibited by tityustoxin-K alpha (TsTX-Kalpha), a toxin that is highly specific for KCNA2. Inhibited by maurotoxin. Inhibited by kappaM conotoxins kappaM-RIIIJ and kappaM-RIIIK; kappaM-RIIIJ has much higher affinity for channels containing KCNA2 than kappaM-RIIIK, with the exception of heterodimers formed by KCNA2 and KCNA7 where the opposite is true. Its function is as follows. Voltage-gated potassium channel that mediates transmembrane potassium transport in excitable membranes, primarily in the brain and the central nervous system, but also in the cardiovascular system. Prevents aberrant action potential firing and regulates neuronal output. Forms tetrameric potassium-selective channels through which potassium ions pass in accordance with their electrochemical gradient. The channel alternates between opened and closed conformations in response to the voltage difference across the membrane. Can form functional homotetrameric channels and heterotetrameric channels that contain variable proportions of KCNA1, KCNA2, KCNA4, KCNA5, KCNA6, KCNA7, and possibly other family members as well; channel properties depend on the type of alpha subunits that are part of the channel. Channel properties are modulated by cytoplasmic beta subunits that regulate the subcellular location of the alpha subunits and promote rapid inactivation of delayed rectifier potassium channels. In vivo, membranes probably contain a mixture of heteromeric potassium channel complexes, making it difficult to assign currents observed in intact tissues to any particular potassium channel family member. Homotetrameric KCNA2 forms a delayed-rectifier potassium channel that opens in response to membrane depolarization, followed by slow spontaneous channel closure. In contrast, a heteromultimer formed by KCNA2 and KCNA4 shows rapid inactivation. Regulates neuronal excitability and plays a role as pacemaker in the regulation of neuronal action potentials. KCNA2-containing channels play a presynaptic role and prevent hyperexcitability and aberrant action potential firing. Response to toxins that are selective for KCNA2-containing potassium channels suggests that in Purkinje cells, dendritic subthreshold KCNA2-containing potassium channels prevent random spontaneous calcium spikes, suppressing dendritic hyperexcitability without hindering the generation of somatic action potentials, and thereby play an important role in motor coordination. Plays a role in the induction of long-term potentiation of neuron excitability in the CA3 layer of the hippocampus. May function as down-stream effector for G protein-coupled receptors and inhibit GABAergic inputs to basolateral amygdala neurons. May contribute to the regulation of neurotransmitter release, such as gamma-aminobutyric acid (GABA). Contributes to the regulation of the axonal release of the neurotransmitter dopamine. Reduced KCNA2 expression plays a role in the perception of neuropathic pain after peripheral nerve injury, but not acute pain. Plays a role in the regulation of the time spent in non-rapid eye movement (NREM) sleep. The polypeptide is Potassium voltage-gated channel subfamily A member 2 (KCNA2) (Homo sapiens (Human)).